The primary structure comprises 236 residues: 2-C-methyl-D-erythritol 4-phosphate cytidylyltransferase (236 aa).

It belongs to the IspD/TarI cytidylyltransferase family. IspD subfamily. Homodimer.

The enzyme catalyses 2-C-methyl-D-erythritol 4-phosphate + CTP + H(+) = 4-CDP-2-C-methyl-D-erythritol + diphosphate. Its pathway is isoprenoid biosynthesis; isopentenyl diphosphate biosynthesis via DXP pathway; isopentenyl diphosphate from 1-deoxy-D-xylulose 5-phosphate: step 2/6. Functionally, catalyzes the formation of 4-diphosphocytidyl-2-C-methyl-D-erythritol from CTP and 2-C-methyl-D-erythritol 4-phosphate (MEP). This Salmonella heidelberg (strain SL476) protein is 2-C-methyl-D-erythritol 4-phosphate cytidylyltransferase.